A 383-amino-acid polypeptide reads, in one-letter code: Succinyl-diaminopimelate desuccinylase (383 aa).

Histidine 79 is a Zn(2+) binding site. Aspartate 81 is a catalytic residue. Residue aspartate 110 participates in Zn(2+) binding. Glutamate 141 (proton acceptor) is an active-site residue. Residues glutamate 142, glutamate 170, and histidine 355 each coordinate Zn(2+).

It belongs to the peptidase M20A family. DapE subfamily. In terms of assembly, homodimer. Zn(2+) serves as cofactor. It depends on Co(2+) as a cofactor.

It catalyses the reaction N-succinyl-(2S,6S)-2,6-diaminopimelate + H2O = (2S,6S)-2,6-diaminopimelate + succinate. Its pathway is amino-acid biosynthesis; L-lysine biosynthesis via DAP pathway; LL-2,6-diaminopimelate from (S)-tetrahydrodipicolinate (succinylase route): step 3/3. Catalyzes the hydrolysis of N-succinyl-L,L-diaminopimelic acid (SDAP), forming succinate and LL-2,6-diaminopimelate (DAP), an intermediate involved in the bacterial biosynthesis of lysine and meso-diaminopimelic acid, an essential component of bacterial cell walls. This Helicobacter pylori (strain P12) protein is Succinyl-diaminopimelate desuccinylase.